The sequence spans 401 residues: Acetate kinase (401 aa).

Asn-7 provides a ligand contact to Mg(2+). Lys-14 contributes to the ATP binding site. Arg-91 provides a ligand contact to substrate. Asp-148 (proton donor/acceptor) is an active-site residue. ATP is bound by residues 208–212, 283–285, and 331–335; these read HLGNG, DFR, and GVGEN. A Mg(2+)-binding site is contributed by Glu-384.

This sequence belongs to the acetokinase family. As to quaternary structure, homodimer. It depends on Mg(2+) as a cofactor. The cofactor is Mn(2+).

It is found in the cytoplasm. It carries out the reaction acetate + ATP = acetyl phosphate + ADP. Its pathway is metabolic intermediate biosynthesis; acetyl-CoA biosynthesis; acetyl-CoA from acetate: step 1/2. Functionally, catalyzes the formation of acetyl phosphate from acetate and ATP. Can also catalyze the reverse reaction. This is Acetate kinase from Helicobacter hepaticus (strain ATCC 51449 / 3B1).